The sequence spans 365 residues: Flagellar P-ring protein (365 aa).

The first 19 residues, 1–19 (MIKFLSALILLLVTTAAQA), serve as a signal peptide directing secretion.

This sequence belongs to the FlgI family. As to quaternary structure, the basal body constitutes a major portion of the flagellar organelle and consists of four rings (L,P,S, and M) mounted on a central rod.

The protein localises to the periplasm. It is found in the bacterial flagellum basal body. In terms of biological role, assembles around the rod to form the L-ring and probably protects the motor/basal body from shearing forces during rotation. The polypeptide is Flagellar P-ring protein (Shigella flexneri serotype 5b (strain 8401)).